Reading from the N-terminus, the 332-residue chain is MSTKEKLISHVMKEEPVGSRNKVTVVGVGMVGMASAISILLKDLCDELAMVDVMEDKLKGEVMDLQHGSLFLKTHKIVGDKDYSVTANSKLVVVTAGARQQEGESRLNLVQRNVNIFKFIIPNIVKYSPNCILMVVSNPVDILTYVAWKLSGFPRHRVLGSGTNLDSARFRHLIGEKLNLHPSSCHAWIIGEHGDSSVPVWSGLNVAGVSLQGLNPQMGTEGDSENWKAIHKEVVDGAYEVIKLKGYTSWAIGMSVADLVESILKNLHKVHPVSTLVQGMHGVKDEVFLSVPCVLGNSGLTDVVHMTLKAEEEKQVQNSAETLWGVQKELTL.

Residues 29–57 (GMVG…MEDK) and Arg99 each bind NAD(+). 3 residues coordinate substrate: Arg106, Asn138, and Arg169. Asn138 serves as a coordination point for NAD(+). His193 acts as the Proton acceptor in catalysis. Thr248 provides a ligand contact to substrate.

It belongs to the LDH/MDH superfamily. LDH family. Homotetramer.

The protein resides in the cytoplasm. It carries out the reaction (S)-lactate + NAD(+) = pyruvate + NADH + H(+). Its pathway is fermentation; pyruvate fermentation to lactate; (S)-lactate from pyruvate: step 1/1. Interconverts simultaneously and stereospecifically pyruvate and lactate with concomitant interconversion of NADH and NAD(+). This chain is L-lactate dehydrogenase A chain (ldha), found in Eleginops maclovinus (Patagonian blennie).